The following is a 478-amino-acid chain: ATP-dependent RNA helicase DDX19A (478 aa).

Position 2 is an N-acetylalanine (Ala-2). An N-terminal lobe region spans residues 2-299 (ATDSWALAVD…DPNVIKLKRE (298 aa)). Lys-26 participates in a covalent cross-link: Glycyl lysine isopeptide (Lys-Gly) (interchain with G-Cter in SUMO1); alternate. A Glycyl lysine isopeptide (Lys-Gly) (interchain with G-Cter in SUMO2); alternate cross-link involves residue Lys-26. Thr-42 carries the post-translational modification Phosphothreonine. Residues 54 to 67 (DRAAQSLLNKLIRS) are N-terminal helix. Positions 91–119 (KSFEELRLKPQLLQGVYAMGFNRPSKIQE) match the Q motif motif. Residues Gln-118 and 137 to 144 (SQSGTGKT) contribute to the ATP site. Residues 124–294 (MMLAEPPQNL…QKVVPDPNVI (171 aa)) enclose the Helicase ATP-binding domain. Residues 241-244 (DEAD) carry the DEAD box motif. The C-terminal lobe stretch occupies residues 300-478 (EETLDTIKQY…DLDEIEKIAN (179 aa)). The Helicase C-terminal domain occupies 305–473 (TIKQYYVLCS…RLDTDDLDEI (169 aa)). Arg-428 and Arg-431 together coordinate ATP.

Belongs to the DEAD box helicase family. DDX19/DBP5 subfamily.

The protein resides in the cytoplasm. The protein localises to the nucleus. Its subcellular location is the nucleoplasm. The enzyme catalyses ATP + H2O = ADP + phosphate + H(+). Its function is as follows. ATP-dependent RNA helicase involved in mRNA export from the nucleus. Rather than unwinding RNA duplexes, DDX19 functions as a remodeler of ribonucleoprotein particles, whereby proteins bound to nuclear mRNA are dissociated and replaced by cytoplasmic mRNA binding proteins. The sequence is that of ATP-dependent RNA helicase DDX19A (DDX19A) from Homo sapiens (Human).